Reading from the N-terminus, the 132-residue chain is Small ribosomal subunit protein uS13 (132 aa).

Positions 101–125 (RGLPVRGQRTKTNARTRKGPRKTVA) are enriched in basic residues. The tract at residues 101 to 132 (RGLPVRGQRTKTNARTRKGPRKTVANKKIETR) is disordered.

The protein belongs to the universal ribosomal protein uS13 family. In terms of assembly, part of the 30S ribosomal subunit. Forms a loose heterodimer with protein S19. Forms two bridges to the 50S subunit in the 70S ribosome.

Functionally, located at the top of the head of the 30S subunit, it contacts several helices of the 16S rRNA. In the 70S ribosome it contacts the 23S rRNA (bridge B1a) and protein L5 of the 50S subunit (bridge B1b), connecting the 2 subunits; these bridges are implicated in subunit movement. Contacts the tRNAs in the A and P-sites. This is Small ribosomal subunit protein uS13 from Ureaplasma parvum serovar 3 (strain ATCC 27815 / 27 / NCTC 11736).